The chain runs to 100 residues: DNA base-flipping protein (100 aa).

It belongs to the MGMT family. ATL subfamily.

Involved in DNA damage recognition. Binds DNA containing O(6)-methylguanine. Binds to the damaged base and flips the base out of the DNA duplex into an extrahelical conformation, which allows processing by repair proteins. This Vibrio parahaemolyticus serotype O3:K6 (strain AQ3810) protein is DNA base-flipping protein.